The sequence spans 532 residues: Probable pectinesterase/pectinesterase inhibitor 39 (532 aa).

The signal sequence occupies residues 1-34 (MINNHPIREKPKHIIFNLLSLIFFLIFLSTVVSS). The pectinesterase inhibitor 39 stretch occupies residues 35–169 (QSPSYTTHKT…ENLKEIILDI (135 aa)). N-linked (GlcNAc...) asparagine glycans are attached at residues Asn-62, Asn-74, Asn-85, Asn-172, Asn-221, Asn-231, Asn-244, and Asn-287. The tract at residues 221 to 518 (NLSVAIDGTG…FTVGPFIDGS (298 aa)) is pectinesterase 39. Substrate contacts are provided by Thr-296 and Gln-326. The Proton donor; for pectinesterase activity role is filled by Asp-349. The active-site Nucleophile; for pectinesterase activity is Asp-370. Residues Asn-382 and Asn-404 are each glycosylated (N-linked (GlcNAc...) asparagine). Positions 438 and 440 each coordinate substrate. N-linked (GlcNAc...) asparagine glycosylation is found at Asn-502 and Asn-522.

The protein in the N-terminal section; belongs to the PMEI family. In the C-terminal section; belongs to the pectinesterase family. Expressed in siliques but not in flower buds.

Its subcellular location is the secreted. The protein localises to the cell wall. It catalyses the reaction [(1-&gt;4)-alpha-D-galacturonosyl methyl ester](n) + n H2O = [(1-&gt;4)-alpha-D-galacturonosyl](n) + n methanol + n H(+). It participates in glycan metabolism; pectin degradation; 2-dehydro-3-deoxy-D-gluconate from pectin: step 1/5. Its function is as follows. Acts in the modification of cell walls via demethylesterification of cell wall pectin. The protein is Probable pectinesterase/pectinesterase inhibitor 39 (PME39) of Arabidopsis thaliana (Mouse-ear cress).